A 434-amino-acid polypeptide reads, in one-letter code: Bifunctional protein GlmU (434 aa).

Residues 1-226 (MNKNKISIVI…ENEYKGVNSK (226 aa)) are pyrophosphorylase. Residues 11 to 14 (LAAG), Lys25, Gln77, and 84 to 85 (GT) each bind UDP-N-acetyl-alpha-D-glucosamine. Asp105 is a binding site for Mg(2+). Positions 138, 152, 167, and 224 each coordinate UDP-N-acetyl-alpha-D-glucosamine. Asn224 is a Mg(2+) binding site. Residues 227–247 (KDLSDAEIIMQDKIKNSLMES) form a linker region. The interval 248–434 (GVTMQLPSTI…DFYYKFFAKK (187 aa)) is N-acetyltransferase. The UDP-N-acetyl-alpha-D-glucosamine site is built by Arg311 and Lys328. His339 functions as the Proton acceptor in the catalytic mechanism. Residues Tyr342 and Asn353 each contribute to the UDP-N-acetyl-alpha-D-glucosamine site. Acetyl-CoA is bound by residues Ala356, 362–363 (NY), Ser381, and Ala399.

The protein in the N-terminal section; belongs to the N-acetylglucosamine-1-phosphate uridyltransferase family. This sequence in the C-terminal section; belongs to the transferase hexapeptide repeat family. In terms of assembly, homotrimer. Requires Mg(2+) as cofactor.

The protein resides in the cytoplasm. It carries out the reaction alpha-D-glucosamine 1-phosphate + acetyl-CoA = N-acetyl-alpha-D-glucosamine 1-phosphate + CoA + H(+). It catalyses the reaction N-acetyl-alpha-D-glucosamine 1-phosphate + UTP + H(+) = UDP-N-acetyl-alpha-D-glucosamine + diphosphate. It functions in the pathway nucleotide-sugar biosynthesis; UDP-N-acetyl-alpha-D-glucosamine biosynthesis; N-acetyl-alpha-D-glucosamine 1-phosphate from alpha-D-glucosamine 6-phosphate (route II): step 2/2. It participates in nucleotide-sugar biosynthesis; UDP-N-acetyl-alpha-D-glucosamine biosynthesis; UDP-N-acetyl-alpha-D-glucosamine from N-acetyl-alpha-D-glucosamine 1-phosphate: step 1/1. Its pathway is bacterial outer membrane biogenesis; LPS lipid A biosynthesis. In terms of biological role, catalyzes the last two sequential reactions in the de novo biosynthetic pathway for UDP-N-acetylglucosamine (UDP-GlcNAc). The C-terminal domain catalyzes the transfer of acetyl group from acetyl coenzyme A to glucosamine-1-phosphate (GlcN-1-P) to produce N-acetylglucosamine-1-phosphate (GlcNAc-1-P), which is converted into UDP-GlcNAc by the transfer of uridine 5-monophosphate (from uridine 5-triphosphate), a reaction catalyzed by the N-terminal domain. The chain is Bifunctional protein GlmU from Sulfurimonas denitrificans (strain ATCC 33889 / DSM 1251) (Thiomicrospira denitrificans (strain ATCC 33889 / DSM 1251)).